The primary structure comprises 433 residues: Acetyl-CoA acetyltransferase erg10A, mitochondrial (433 aa).

The transit peptide at 1-34 (MAIQTTTGLAARLVAKRATFPASRRNFSASRSAL) directs the protein to the mitochondrion. Catalysis depends on cysteine 124, which acts as the Acyl-thioester intermediate. Tyrosine 219 is a binding site for K(+). Positions 229 and 262 each coordinate CoA. K(+) is bound at residue alanine 280. Serine 284 serves as a coordination point for CoA. Catalysis depends on proton acceptor residues histidine 387 and cysteine 415. Asparagine 416 contacts chloride.

This sequence belongs to the thiolase-like superfamily. Thiolase family. Homotetramer. It depends on K(+) as a cofactor.

Its subcellular location is the mitochondrion. The enzyme catalyses 2 acetyl-CoA = acetoacetyl-CoA + CoA. It functions in the pathway metabolic intermediate biosynthesis; (R)-mevalonate biosynthesis; (R)-mevalonate from acetyl-CoA: step 1/3. Functionally, mitochondrial acetyl-CoA acetyltransferase that catalyzes both the formation and degradation of acetoacetyl-CoA. Has no overlapping function with erg10B and seems not to be involved in ergosterol biosynthesis. Plays an important role in growth, morphogenesis and maintaining mitochondrial function including the response to oxidative stresses. The sequence is that of Acetyl-CoA acetyltransferase erg10A, mitochondrial from Aspergillus fumigatus (strain ATCC MYA-4609 / CBS 101355 / FGSC A1100 / Af293) (Neosartorya fumigata).